The following is a 379-amino-acid chain: DNA replication and repair protein RecF (379 aa).

34-41 contributes to the ATP binding site; it reads GDNGAGKT.

It belongs to the RecF family.

It localises to the cytoplasm. The RecF protein is involved in DNA metabolism; it is required for DNA replication and normal SOS inducibility. RecF binds preferentially to single-stranded, linear DNA. It also seems to bind ATP. This chain is DNA replication and repair protein RecF, found in Mesorhizobium japonicum (strain LMG 29417 / CECT 9101 / MAFF 303099) (Mesorhizobium loti (strain MAFF 303099)).